A 200-amino-acid polypeptide reads, in one-letter code: MTSKIFSPKISAVIESLRKLPTIGKKSSQRLALYLLDKSPETAIAIANSLLDATANIKKCVYCQALTEDDVCNICSNTNRDDTKLCIIESMLDMIAIEEAGIYRGKYFVLNGRISPLDGIGPSELKLNILQQIIADRKIDEVILAISPTVEGETTAHFISQMIVKDIKISRIGFGVPFGGELEYLDQQTLLHAFNARTNI.

The segment at 60-75 adopts a C4-type zinc-finger fold; sequence CVYCQALTEDDVCNIC. The 95-residue stretch at 83 to 177 folds into the Toprim domain; that stretch reads TKLCIIESML…KISRIGFGVP (95 aa).

This sequence belongs to the RecR family.

In terms of biological role, may play a role in DNA repair. It seems to be involved in an RecBC-independent recombinational process of DNA repair. It may act with RecF and RecO. The polypeptide is Recombination protein RecR (Francisella tularensis subsp. mediasiatica (strain FSC147)).